The primary structure comprises 880 residues: Beta-glucosidase 2 (880 aa).

The N-terminal stretch at 1-17 (MLLILELLVLIIGLGVA) is a signal peptide. Asparagine 24, asparagine 77, and asparagine 271 each carry an N-linked (GlcNAc...) asparagine glycan. Residue aspartate 299 is part of the active site. Residues asparagine 336, asparagine 343, asparagine 376, asparagine 548, asparagine 589, asparagine 712, asparagine 743, and asparagine 794 are each glycosylated (N-linked (GlcNAc...) asparagine).

The protein belongs to the glycosyl hydrolase 3 family.

The enzyme catalyses Hydrolysis of terminal, non-reducing beta-D-glucosyl residues with release of beta-D-glucose.. It participates in glycan metabolism; cellulose degradation. The protein is Beta-glucosidase 2 (BGL2) of Saccharomycopsis fibuligera (Yeast).